A 189-amino-acid polypeptide reads, in one-letter code: Adenylate kinase (189 aa).

11-16 (GSGKGT) contributes to the ATP binding site. Residues 31–60 (STGDVLRAEIKNGTELGKTAKGYIDQGQLI) form an NMP region. Residues Thr32, Arg37, 58 to 60 (QLI), 86 to 89 (GFPR), and Gln93 contribute to the AMP site. The interval 127 to 137 (KRGKESGRADD) is LID. An ATP-binding site is contributed by Arg128. Positions 134 and 145 each coordinate AMP. Position 173 (Gly173) interacts with ATP.

Belongs to the adenylate kinase family. Monomer.

The protein resides in the cytoplasm. It carries out the reaction AMP + ATP = 2 ADP. Its pathway is purine metabolism; AMP biosynthesis via salvage pathway; AMP from ADP: step 1/1. Its function is as follows. Catalyzes the reversible transfer of the terminal phosphate group between ATP and AMP. Plays an important role in cellular energy homeostasis and in adenine nucleotide metabolism. This Bacteroides fragilis (strain ATCC 25285 / DSM 2151 / CCUG 4856 / JCM 11019 / LMG 10263 / NCTC 9343 / Onslow / VPI 2553 / EN-2) protein is Adenylate kinase.